A 196-amino-acid polypeptide reads, in one-letter code: Serine recombinase PinQ (196 aa).

In terms of domain architecture, Resolvase/invertase-type recombinase catalytic spans 3-143 (QIFAYCRIST…SGIVRARGAG (141 aa)). Serine 11 functions as the O-(5'-phospho-DNA)-serine intermediate in the catalytic mechanism.

This sequence belongs to the site-specific recombinase resolvase family.

The chain is Serine recombinase PinQ (pinQ) from Escherichia coli (strain K12).